Here is an 811-residue protein sequence, read N- to C-terminus: MAHLLFLPILQLLLLYCTKSAQAQLNISIGSSLTPQGVNNSWISPSADFAFGFRAVDGNSSSYLLAVWFNKIADKTVVWYARTSSNGKDDTIPVQVQSGSVLKLADGALSLRDPSGNEVWNPQVTDVGYARMLDTGNFRLLGTDGATKWESFGDPSDTILPTQVLSLGTALHSRLLATDYSNGRFQLKVQRDGNLVMYPDAVPSGYLYDPYWASNTVDNGSQLVFNETGRIYFTIINGSQVNITSAGVDSMGDFFHRATLDTDGVFRQYVYPKNIHARPLWPEQWTAVDVLPENICQSIQTMVGSGACGFNSYCTIDGTKNTTSCLCPQNYKFIDDKRKYKGCRPDFEPQNCDLDETTAMLQYDMAPIDRVDWPLSDYEQYNPIDQTECRRLCVIDCFCAVAVFDKASSTCWKKRFPLSNGKMDVNVPRTVLIKVPRSTNSPSVFSSGSSKWKEDKKYWILGSSLLFGSSVLVNFLLISVMLFGTYCSITSRKKIQLSQPSNKSGLPPKIFTYSELEKATGGFQEVLGTGASGVVYKGQLQDEFGINIAVKKIEKLQQEAQKEFLVEVQTIGQTFHRNLVRLLGFCNEGTERLLVYEFMSNGSLNTFLFSDTHPHWSLRVQVALGVARGLLYLHEECNKQIIHCDMKPQNILLDDNFAAKISDFGLAKLLPVNQTQTNTGIRGTRGYVAPEWFKNIGITSKVDVYSFGVILLELVCCRKNVELEVLDEEQTILTYWANDCYKCGRIDLLVAGDDEAIFNIKKVERFVAVALWCLQEEPSMRPTMLKVTQMLDGAVQIPTPPDPSSYISSLA.

Residues 1 to 23 (MAHLLFLPILQLLLLYCTKSAQA) form the signal peptide. The Bulb-type lectin domain occupies 24 to 153 (QLNISIGSSL…DGATKWESFG (130 aa)). At 24–464 (QLNISIGSSL…DKKYWILGSS (441 aa)) the chain is on the extracellular side. N-linked (GlcNAc...) asparagine glycans are attached at residues Asn26, Asn39, Asn59, Asn219, Asn226, Asn237, and Asn242. In terms of domain architecture, EGF-like; atypical spans 292–344 (PENICQSIQTMVGSGACGFNSYCTIDGTKNTTSCLCPQNYKFIDDKRKYKGCR). Disulfide bonds link Cys296-Cys314, Cys308-Cys325, Cys327-Cys343, Cys389-Cys411, and Cys393-Cys399. The N-linked (GlcNAc...) asparagine glycan is linked to Asn321. Positions 352-430 (CDLDETTAML…GKMDVNVPRT (79 aa)) constitute a PAN domain. A helical membrane pass occupies residues 465–485 (LLFGSSVLVNFLLISVMLFGT). Residues 486–811 (YCSITSRKKI…DPSSYISSLA (326 aa)) are Cytoplasmic-facing. A Protein kinase domain is found at 521–795 (GGFQEVLGTG…KVTQMLDGAV (275 aa)). ATP is bound by residues 527–535 (LGTGASGVV) and Lys551. Asp645 functions as the Proton acceptor in the catalytic mechanism.

This sequence belongs to the protein kinase superfamily. Ser/Thr protein kinase family.

The protein resides in the membrane. The enzyme catalyses L-seryl-[protein] + ATP = O-phospho-L-seryl-[protein] + ADP + H(+). It carries out the reaction L-threonyl-[protein] + ATP = O-phospho-L-threonyl-[protein] + ADP + H(+). In terms of biological role, involved in resistance against the herbivorous insect brown planthopper (N.lugens, BPH). Member of the BPH3 (BPH resistance locus 3) cluster which contains LECRK1, LECRK2 and LECRK3. The protein is G-type lectin S-receptor-like serine/threonine-protein kinase LECRK3 of Oryza sativa subsp. indica (Rice).